The primary structure comprises 356 residues: Golgi-resident adenosine 3',5'-bisphosphate 3'-phosphatase (356 aa).

Residue Met-1 is modified to N-acetylmethionine. The Cytoplasmic portion of the chain corresponds to 1 to 12; it reads MAPMGIRLSPLG. Residues 13-33 traverse the membrane as a helical segment; that stretch reads VAVFFLLGLGVLYHLYSGFLA. Over 34 to 356 the chain is Lumenal; that stretch reads GRFSLFGLGG…KLPDLEKSGH (323 aa). The segment at 82 to 104 is disordered; it reads VRESNVLHEKSKGKTREGAEDKM. The active-site Proton acceptor is the Asp-108. The Mg(2+) site is built by Glu-131, Asp-172, Leu-174, and Asp-175. Thr-177 (proton acceptor) is an active-site residue. Residues Ser-240 and His-243 each coordinate AMP. Asn-257 carries N-linked (GlcNAc...) asparagine glycosylation. The AMP site is built by Gly-266 and Lys-270. A Mg(2+)-binding site is contributed by Asp-298.

It belongs to the inositol monophosphatase superfamily. Requires Mg(2+) as cofactor. Contains N-linked glycan resistant to endoglycosydase H.

The protein localises to the golgi apparatus. The protein resides in the trans-Golgi network membrane. The catalysed reaction is adenosine 3',5'-bisphosphate + H2O = AMP + phosphate. The protein operates within sulfur metabolism. Its activity is regulated as follows. Strongly inhibited by lithium. Functionally, exhibits 3'-nucleotidase activity toward adenosine 3',5'-bisphosphate (PAP), namely hydrolyzes adenosine 3',5'-bisphosphate into adenosine 5'-monophosphate (AMP) and a phosphate. May play a role in the formation of skeletal elements derived through endochondral ossification, possibly by clearing adenosine 3',5'-bisphosphate produced by Golgi sulfotransferases during glycosaminoglycan sulfation. Has no activity toward 3'-phosphoadenosine 5'-phosphosulfate (PAPS) or inositol phosphate (IP) substrates including I(1)P, I(1,4)P2, I(1,3,4)P3, I(1,4,5)P3 and I(1,3,4,5)P4. The sequence is that of Golgi-resident adenosine 3',5'-bisphosphate 3'-phosphatase (Bpnt2) from Rattus norvegicus (Rat).